The chain runs to 418 residues: uncharacterized protein (418 aa).

This is an uncharacterized protein from Invertebrate iridescent virus 6 (IIV-6).